The sequence spans 230 residues: Thymine/uracil-DNA glycosylase (230 aa).

Residues Cys-204, Cys-211, Cys-214, and Cys-221 each coordinate [4Fe-4S] cluster.

The protein belongs to the Nth/MutY family. [4Fe-4S] cluster is required as a cofactor.

It catalyses the reaction Hydrolyzes mismatched double-stranded DNA and polynucleotides, releasing free thymine.. In terms of biological role, DNA glycosylase that excises thymine from T/G mismatches and uracil from U/G mismatches. Can also process T/GO and U/GO, but not A/G, T/C and U/C. Has weak AP lyase activity. This is Thymine/uracil-DNA glycosylase from Pyrobaculum aerophilum (strain ATCC 51768 / DSM 7523 / JCM 9630 / CIP 104966 / NBRC 100827 / IM2).